The sequence spans 512 residues: ATP synthase subunit alpha (512 aa).

169-176 (GDRQTGKT) serves as a coordination point for ATP.

Belongs to the ATPase alpha/beta chains family. In terms of assembly, F-type ATPases have 2 components, CF(1) - the catalytic core - and CF(0) - the membrane proton channel. CF(1) has five subunits: alpha(3), beta(3), gamma(1), delta(1), epsilon(1). CF(0) has three main subunits: a(1), b(2) and c(9-12). The alpha and beta chains form an alternating ring which encloses part of the gamma chain. CF(1) is attached to CF(0) by a central stalk formed by the gamma and epsilon chains, while a peripheral stalk is formed by the delta and b chains.

It is found in the cell membrane. The enzyme catalyses ATP + H2O + 4 H(+)(in) = ADP + phosphate + 5 H(+)(out). Functionally, produces ATP from ADP in the presence of a proton gradient across the membrane. The alpha chain is a regulatory subunit. The protein is ATP synthase subunit alpha of Buchnera aphidicola subsp. Acyrthosiphon pisum (strain Tuc7).